The primary structure comprises 2167 residues: Glutamate synthase 1 [NADH], chloroplastic (2167 aa).

The tract at residues M1 to V31 is disordered. A chloroplast-targeting transit peptide spans M1–R36. The Nucleophile role is filled by C100. The Glutamine amidotransferase type-2 domain maps to C100–E504. The disordered stretch occupies residues K1022 to S1042. Residue L1192–R1249 coordinates FMN. Residues C1245, C1251, and C1256 each coordinate [3Fe-4S] cluster. G1956–R1970 lines the NAD(+) pocket.

The protein belongs to the glutamate synthase family. As to quaternary structure, monomer. The cofactor is [3Fe-4S] cluster. Requires FAD as cofactor. FMN is required as a cofactor. As to expression, highly expressed in roots.

It is found in the plastid. The protein resides in the chloroplast. It carries out the reaction 2 L-glutamate + NAD(+) = L-glutamine + 2-oxoglutarate + NADH + H(+). The protein operates within amino-acid biosynthesis; L-glutamate biosynthesis via GLT pathway; L-glutamate from 2-oxoglutarate and L-glutamine (NAD(+) route): step 1/1. It functions in the pathway energy metabolism; nitrogen metabolism. Functionally, involved in glutamate biosynthesis and plays a major role in the primary ammonium ions assimilation in seedling roots. May be involved in the reutilization of glutamine in developing organs. Plays a role in the development of tillers. The sequence is that of Glutamate synthase 1 [NADH], chloroplastic from Oryza sativa subsp. japonica (Rice).